Here is a 101-residue protein sequence, read N- to C-terminus: Protein TraL (101 aa).

The protein localises to the cell outer membrane. Its function is as follows. Membrane protein involved in F pilin formation. This Salmonella typhi protein is Protein TraL (traL).